The sequence spans 166 residues: Small ribosomal subunit protein uS5 (166 aa).

The S5 DRBM domain maps to Tyr12–Val75.

It belongs to the universal ribosomal protein uS5 family. Part of the 30S ribosomal subunit. Contacts proteins S4 and S8.

Its function is as follows. With S4 and S12 plays an important role in translational accuracy. Located at the back of the 30S subunit body where it stabilizes the conformation of the head with respect to the body. This chain is Small ribosomal subunit protein uS5, found in Pseudomonas fluorescens (strain ATCC BAA-477 / NRRL B-23932 / Pf-5).